We begin with the raw amino-acid sequence, 300 residues long: 4-hydroxy-tetrahydrodipicolinate synthase (300 aa).

T49 is a binding site for pyruvate. The Proton donor/acceptor role is filled by Y137. The active-site Schiff-base intermediate with substrate is the K165. I207 serves as a coordination point for pyruvate.

This sequence belongs to the DapA family. As to quaternary structure, homotetramer; dimer of dimers.

Its subcellular location is the cytoplasm. The enzyme catalyses L-aspartate 4-semialdehyde + pyruvate = (2S,4S)-4-hydroxy-2,3,4,5-tetrahydrodipicolinate + H2O + H(+). It participates in amino-acid biosynthesis; L-lysine biosynthesis via DAP pathway; (S)-tetrahydrodipicolinate from L-aspartate: step 3/4. Its function is as follows. Catalyzes the condensation of (S)-aspartate-beta-semialdehyde [(S)-ASA] and pyruvate to 4-hydroxy-tetrahydrodipicolinate (HTPA). This is 4-hydroxy-tetrahydrodipicolinate synthase from Nitrosospira multiformis (strain ATCC 25196 / NCIMB 11849 / C 71).